The following is a 354-amino-acid chain: Biotin synthase (354 aa).

The 219-residue stretch at 64-282 (GDVELATLLS…IAVARITMPR (219 aa)) folds into the Radical SAM core domain. The [4Fe-4S] cluster site is built by C79, C83, and C86. The [2Fe-2S] cluster site is built by C123, C154, C214, and R286.

It belongs to the radical SAM superfamily. Biotin synthase family. In terms of assembly, homodimer. It depends on [4Fe-4S] cluster as a cofactor. The cofactor is [2Fe-2S] cluster.

It carries out the reaction (4R,5S)-dethiobiotin + (sulfur carrier)-SH + 2 reduced [2Fe-2S]-[ferredoxin] + 2 S-adenosyl-L-methionine = (sulfur carrier)-H + biotin + 2 5'-deoxyadenosine + 2 L-methionine + 2 oxidized [2Fe-2S]-[ferredoxin]. Its pathway is cofactor biosynthesis; biotin biosynthesis; biotin from 7,8-diaminononanoate: step 2/2. Catalyzes the conversion of dethiobiotin (DTB) to biotin by the insertion of a sulfur atom into dethiobiotin via a radical-based mechanism. The chain is Biotin synthase from Paracidovorax citrulli (strain AAC00-1) (Acidovorax citrulli).